Reading from the N-terminus, the 747-residue chain is Myotubularin-related protein 12 (747 aa).

The 439-residue stretch at 205 to 643 (FDTPKDWCWE…PEIKVWAQRY (439 aa)) folds into the Myotubularin phosphatase domain. The interval 449–558 (VPIFLLFLDC…RGQQKGSRFK (110 aa)) is interaction with MTM1. The segment at 548–575 (DRGQQKGSRFKHQRQLSLPLTQSKSSPK) is disordered. Positions 562–572 (QLSLPLTQSKS) are enriched in polar residues. A phosphoserine mark is found at S564 and S601.

Belongs to the protein-tyrosine phosphatase family. Non-receptor class myotubularin subfamily. As to quaternary structure, heterodimer with lipid phosphatase MTM1. Heterodimer with lipid phosphatase MTMR2. As to expression, expressed in skeletal muscles (at protein level).

The protein localises to the cytoplasm. The protein resides in the sarcoplasmic reticulum. It localises to the myofibril. It is found in the sarcomere. Functionally, acts as an adapter for the myotubularin-related phosphatases. Regulates phosphatase MTM1 protein stability and possibly its intracellular location. By stabilizing MTM1 protein levels, required for skeletal muscle maintenance but not for myogenesis. The sequence is that of Myotubularin-related protein 12 (Mtmr12) from Mus musculus (Mouse).